A 221-amino-acid polypeptide reads, in one-letter code: Protein Thf1 (221 aa).

Residues 174-213 are a coiled coil; sequence TKERVEKDVNLYKSSLDKIEKALELIEMNIKDEKRRNKER.

This sequence belongs to the THF1 family.

May be involved in photosynthetic membrane biogenesis. This is Protein Thf1 from Prochlorococcus marinus (strain MIT 9211).